A 313-amino-acid chain; its full sequence is Protoheme IX farnesyltransferase (313 aa).

The next 9 helical transmembrane spans lie at 33-53, 59-79, 107-127, 129-149, 162-182, 188-208, 212-232, 252-272, and 292-312; these read IALM…PVML, MPSW…AGSA, VEPA…TLMF, LLVN…YVFV, IVIG…AVTG, AVLL…ALAI, DDYA…EVVT, VADI…WFVA, and LFHM…AAAL.

It belongs to the UbiA prenyltransferase family. Protoheme IX farnesyltransferase subfamily.

The protein localises to the cell membrane. The enzyme catalyses heme b + (2E,6E)-farnesyl diphosphate + H2O = Fe(II)-heme o + diphosphate. It participates in porphyrin-containing compound metabolism; heme O biosynthesis; heme O from protoheme: step 1/1. In terms of biological role, converts heme B (protoheme IX) to heme O by substitution of the vinyl group on carbon 2 of heme B porphyrin ring with a hydroxyethyl farnesyl side group. This Parafrankia sp. (strain EAN1pec) protein is Protoheme IX farnesyltransferase.